Here is a 376-residue protein sequence, read N- to C-terminus: Fibromodulin (376 aa).

Positions 1–18 (MQWASILLLAGLCSLSWA) are cleaved as a signal peptide. Gln-19 carries the post-translational modification Pyrrolidone carboxylic acid. Sulfotyrosine is present on residues Tyr-20, Tyr-38, Tyr-45, Tyr-47, Tyr-50, Tyr-53, Tyr-55, Tyr-63, and Tyr-65. The 39-residue stretch at 67 to 105 (SPPQPEPRDCPQECDCPPNFPTAMYCDNRNLKYLPFVPS) folds into the LRRNT domain. LRR repeat units lie at residues 106-127 (RMKYVYFQNNQISSIQEGVFDN), 130-151 (GLLWIALHGNQITSDKVGKKVF), 156-176 (HLERLYLDHNNLTRIPSPLPR), 177-198 (SLRELHLDHNQISRVPNNALEG), 201-222 (NLTALYLHHNEIQEVGSSMKGL), 224-245 (SLILLDLSYNHLRKVPDGLPSA), 246-266 (LEQLYLEHNNVFSVPDSYFRG), and 269-289 (KLLYVRLSHNSLTNNGLASNT). N-linked (GlcNAc...) (keratan sulfate) asparagine glycosylation occurs at Asn-127. Residue Asn-166 is glycosylated (N-linked (GlcNAc...) (keratan sulfate) asparagine). Asn-201 is a glycosylation site (N-linked (GlcNAc...) (keratan sulfate) asparagine). Asn-291 is a glycosylation site (N-linked (GlcNAc...) (keratan sulfate) asparagine). LRR repeat units lie at residues 294–315 (SLLELDLSYNQLQKIPPVSTNL) and 316–335 (ENLYLQGNRINEFSISSFCT). Cysteines 334 and 367 form a disulfide. The N-linked (GlcNAc...) asparagine glycan is linked to Asn-341. The stretch at 344–365 (KLQVLRLDGNEIKRSAMPADAP) is one LRR 11 repeat.

This sequence belongs to the small leucine-rich proteoglycan (SLRP) family. SLRP class II subfamily. Binds to type I and type II collagen. In terms of processing, binds keratan sulfate chains.

Its subcellular location is the secreted. The protein localises to the extracellular space. The protein resides in the extracellular matrix. Affects the rate of fibrils formation. May have a primary role in collagen fibrillogenesis. The sequence is that of Fibromodulin (FMOD) from Bos taurus (Bovine).